We begin with the raw amino-acid sequence, 249 residues long: MADS-box transcription factor 7 (249 aa).

The region spanning 1-61 (MGRGRVELKR…GKLYEFCSTQ (61 aa)) is the MADS-box domain. The 91-residue stretch at 90 to 180 (LKASRNEYLK…RRKLEESNHV (91 aa)) folds into the K-box domain.

May interact with the K-box of MADS6. May interact with MADS13 and MADS18. In terms of tissue distribution, expressed in lodicules, stamens and carpels.

Its subcellular location is the nucleus. Functionally, probable transcription factor. May be involved in the control of flowering time. In Oryza sativa subsp. japonica (Rice), this protein is MADS-box transcription factor 7 (MADS7).